The primary structure comprises 133 residues: DNA-directed RNA polymerases I and III subunit RPAC2 (133 aa).

N-acetylmethionine is present on M1.

This sequence belongs to the archaeal Rpo11/eukaryotic RPB11/RPC19 RNA polymerase subunit family. In terms of assembly, component of the RNA polymerase I and RNA polymerase III complexes consisting of at least 13 and 17 subunits, respectively. Pol I complex consists of a ten-subunit catalytic core composed of POLR1A/RPA1, POLR1B/RPA2, POLR1C/RPAC1, POLR1D/RPAC2, POLR1H/RPA12, POLR2E/RPABC1, POLR2F/RPABC2, POLR2H/RPABC3, POLR2K/RPABC4 and POLR2L/RPABC5; a mobile stalk subunit POLR1F/RPA43 protruding from the core and additional subunits homologous to general transcription factors POLR1E/RPA49 and POLR1G/RPA34. Part of Pol I pre-initiation complex (PIC), in which Pol I core assembles with RRN3 and promoter-bound UTBF and SL1/TIF-IB complex. Pol III complex consists of a ten-subunit catalytic core composed of POLR3A/RPC1, POLR3B/RPC2, POLR1C/RPAC1, POLR1D/RPAC2, POLR3K/RPC10, POLR2E/RPABC1, POLR2F/RPABC2, POLR2H/RPABC3, POLR2K/RPABC4 and POLR2L/RPABC5; a mobile stalk composed of two subunits POLR3H/RPC8 and CRCP/RPC9, protruding from the core and functioning primarily in transcription initiation; and additional subunits homologous to general transcription factors of the RNA polymerase II machinery, POLR3C/RPC3-POLR3F/RPC6-POLR3G/RPC7 heterotrimer required for transcription initiation and POLR3D/RPC4-POLR3E/RPC5 heterodimer involved in both transcription initiation and termination.

The protein resides in the nucleus. The protein localises to the nucleolus. Its function is as follows. DNA-dependent RNA polymerase catalyzes the transcription of DNA into RNA using the four ribonucleoside triphosphates as substrates. Common component of RNA polymerases I and III which synthesize ribosomal RNA precursors and short non-coding RNAs including 5S rRNA, snRNAs, tRNAs and miRNAs, respectively. The polypeptide is DNA-directed RNA polymerases I and III subunit RPAC2 (Homo sapiens (Human)).